A 302-amino-acid polypeptide reads, in one-letter code: Putative gluconeogenesis factor (302 aa).

It belongs to the gluconeogenesis factor family.

The protein localises to the cytoplasm. Functionally, required for morphogenesis under gluconeogenic growth conditions. The sequence is that of Putative gluconeogenesis factor (ybhK) from Escherichia coli O157:H7.